A 260-amino-acid polypeptide reads, in one-letter code: Endomucin (260 aa).

The N-terminal stretch at 1–18 (MELLQVTILFLLPSICSS) is a signal peptide. N-linked (GlcNAc...) asparagine glycans are attached at residues asparagine 19, asparagine 28, asparagine 97, and asparagine 103. Topologically, residues 19–189 (NSTGVLEAAN…TSATSRSYSS (171 aa)) are extracellular. 2 stretches are compositionally biased toward polar residues: residues 119-133 (QSSKPKTETQSSIKT) and 145-170 (ASPSETGTLSSIPVTIPENTSQSQVI). Positions 119–182 (QSSKPKTETQ…EGGKNASTSA (64 aa)) are disordered. 2 N-linked (GlcNAc...) asparagine glycosylation sites follow: asparagine 163 and asparagine 177. Residues 190-210 (IILPVVIALIVITLSVFVLVG) traverse the membrane as a helical segment. Residues 211–260 (LYRMCWKADPGTPENGNDQPQSDKESVKLLTVKTISHESGEHSAQGKTKN) are Cytoplasmic-facing. At serine 236 the chain carries Phosphoserine.

Post-translationally, highly O-glycosylated. Sialic acid-rich glycoprotein.

It localises to the membrane. Endothelial sialomucin, also called endomucin or mucin-like sialoglycoprotein, which interferes with the assembly of focal adhesion complexes and inhibits interaction between cells and the extracellular matrix. This Pongo abelii (Sumatran orangutan) protein is Endomucin (EMCN).